A 266-amino-acid chain; its full sequence is Putative carbamate hydrolase RutD (266 aa).

It belongs to the AB hydrolase superfamily. Hydrolase RutD family.

The catalysed reaction is carbamate + 2 H(+) = NH4(+) + CO2. Involved in pyrimidine catabolism. May facilitate the hydrolysis of carbamate, a reaction that can also occur spontaneously. The sequence is that of Putative carbamate hydrolase RutD from Enterobacter cloacae subsp. cloacae (strain ATCC 13047 / DSM 30054 / NBRC 13535 / NCTC 10005 / WDCM 00083 / NCDC 279-56).